Reading from the N-terminus, the 128-residue chain is Glycine cleavage system H protein (128 aa).

In terms of domain architecture, Lipoyl-binding spans 24–106; the sequence is SVTVGITAHA…YGDGWFFKIK (83 aa). Lysine 65 carries the post-translational modification N6-lipoyllysine.

It belongs to the GcvH family. As to quaternary structure, the glycine cleavage system is composed of four proteins: P, T, L and H. The cofactor is (R)-lipoate.

Functionally, the glycine cleavage system catalyzes the degradation of glycine. The H protein shuttles the methylamine group of glycine from the P protein to the T protein. The sequence is that of Glycine cleavage system H protein from Chromobacterium violaceum (strain ATCC 12472 / DSM 30191 / JCM 1249 / CCUG 213 / NBRC 12614 / NCIMB 9131 / NCTC 9757 / MK).